The following is a 214-amino-acid chain: Probable DNA (cytosine-5)-methyltransferase (214 aa).

Cys62 is an active-site residue.

Belongs to the class I-like SAM-binding methyltransferase superfamily. C5-methyltransferase family. As to quaternary structure, probably requires another subunit for function.

The catalysed reaction is a 2'-deoxycytidine in DNA + S-adenosyl-L-methionine = a 5-methyl-2'-deoxycytidine in DNA + S-adenosyl-L-homocysteine + H(+). This is probably the methylase that recognizes and modifies 5'-CpG-3'. The sequence is that of Probable DNA (cytosine-5)-methyltransferase from Dryophytes versicolor (chameleon treefrog).